The sequence spans 202 residues: Neuroligin-3 (202 aa).

At 1–202 the chain is on the extracellular side; it reads RYGSPTYFYA…TGTRMQGHSW (202 aa). Cys15 and Cys49 form a disulfide bridge. Asn50 is a glycosylation site (N-linked (GlcNAc...) asparagine). The tract at residues 154-202 is disordered; it reads LRIPPTAPTSPAGPMARPGAPSGQPSHLPTATRMPRGPGTGTRMQGHSW.

It belongs to the type-B carboxylesterase/lipase family. As to quaternary structure, homodimer, and heterodimer with NLGN1 and NLGN2. Interacts with neurexins NRXN1, NRXN2 and NRXN3. Interaction with neurexins is mediated by heparan sulfate glycan modification on neurexin. Interacts (via its C-terminus) with DLG4/PSD-95 (via PDZ domain 3).

The protein resides in the cell membrane. The protein localises to the synapse. Cell surface protein involved in cell-cell-interactions via its interactions with neurexin family members. Plays a role in synapse function and synaptic signal transmission, and probably mediates its effects by recruiting and clustering other synaptic proteins. May promote the initial formation of synapses, but is not essential for this. May also play a role in glia-glia or glia-neuron interactions in the developing peripheral nervous system. This chain is Neuroligin-3 (NLGN3), found in Macaca mulatta (Rhesus macaque).